Here is a 308-residue protein sequence, read N- to C-terminus: Energy-coupling factor transporter ATP-binding protein EcfA2 (308 aa).

The 261-residue stretch at 3–263 (IEVKNISKVF…VDFLRENEME (261 aa)) folds into the ABC transporter domain. 40 to 47 (GPTGSGKT) is a binding site for ATP.

The protein belongs to the ABC transporter superfamily. Energy-coupling factor EcfA family. In terms of assembly, forms a stable energy-coupling factor (ECF) transporter complex composed of 2 membrane-embedded substrate-binding proteins (S component), 2 ATP-binding proteins (A component) and 2 transmembrane proteins (T component).

It localises to the cell membrane. In terms of biological role, ATP-binding (A) component of a common energy-coupling factor (ECF) ABC-transporter complex. Unlike classic ABC transporters this ECF transporter provides the energy necessary to transport a number of different substrates. The sequence is that of Energy-coupling factor transporter ATP-binding protein EcfA2 from Mycoplasma mobile (strain ATCC 43663 / 163K / NCTC 11711) (Mesomycoplasma mobile).